Here is a 934-residue protein sequence, read N- to C-terminus: Serine/threonine-protein kinase KIPK1 (934 aa).

6 disordered regions span residues 20–40, 70–113, 189–227, 305–343, 395–438, and 466–493; these read LPKH…KDLV, RLMS…RFVG, PLMP…FGLQ, SSSA…RPKQ, SIDD…SCNV, and EKET…DYSR. 2 stretches are compositionally biased toward polar residues: residues 82 to 94 and 212 to 227; these read SASA…TSPS and NPIS…FGLQ. A compositionally biased stretch (polar residues) spans 395–421; that stretch reads SIDDNPPSYTSSHNPKICTDSLSSVSN. The region spanning 538–879 is the Protein kinase domain; that stretch reads FNLLKKLGCG…SVEIKRHPFF (342 aa). ATP is bound by residues 544 to 552 and K567; that span reads LGCGDIGTV. Residue D663 is the Proton acceptor of the active site. The disordered stretch occupies residues 738 to 773; it reads SSNQQQGRKPKRGDHLSKTQQHLSRSLPQLVAEPTE. Over residues 755-764 the composition is skewed to polar residues; that stretch reads KTQQHLSRSL.

It belongs to the protein kinase superfamily. Ser/Thr protein kinase family. In terms of assembly, interacts with KCBP. Interacts with PERK8, PERK9, PERK10 and PERK13. In terms of processing, autophosphorylated. Expressed in roots, cauline leaves, flowers and siliques.

Its subcellular location is the cytoplasm. The protein resides in the nucleus. It catalyses the reaction L-seryl-[protein] + ATP = O-phospho-L-seryl-[protein] + ADP + H(+). It carries out the reaction L-threonyl-[protein] + ATP = O-phospho-L-threonyl-[protein] + ADP + H(+). Could be involved in the negative regulation of root growth. This chain is Serine/threonine-protein kinase KIPK1, found in Arabidopsis thaliana (Mouse-ear cress).